The chain runs to 215 residues: Ribose-5-phosphate isomerase A (215 aa).

Substrate-binding positions include Thr-26–Thr-29, Asp-79–Asp-82, and Lys-92–Gly-95. The active-site Proton acceptor is the Glu-101. Lys-119 provides a ligand contact to substrate.

Belongs to the ribose 5-phosphate isomerase family. Homodimer.

The catalysed reaction is aldehydo-D-ribose 5-phosphate = D-ribulose 5-phosphate. It participates in carbohydrate degradation; pentose phosphate pathway; D-ribose 5-phosphate from D-ribulose 5-phosphate (non-oxidative stage): step 1/1. Its function is as follows. Catalyzes the reversible conversion of ribose-5-phosphate to ribulose 5-phosphate. The protein is Ribose-5-phosphate isomerase A of Xanthomonas oryzae pv. oryzae (strain MAFF 311018).